We begin with the raw amino-acid sequence, 540 residues long: MATQSSAVIDSNDATRISRSDFPADFIMGTGSSAYQIEGGARDGGRGPSIWDTFTHRRPDMIRGGTNGDVAVDSYHLYKEDVNILKNLGLDAYRFSISWSRVLPGGRLSGGVNKEGINYYNNLIDGLLANGIKPFVTLFHWDVPQALEDEYGGFLSPRIVDDFCEYAELCFWEFGDRVKHWMTLNEPWTFSVHGYATGLYAPGRGRTSPEHVNHPTVQHRCSTVAPQCICSTGNPGTEPYWVTHHLLLAHAAAVELYKNKFQRGQEGQIGISHATQWMEPWDENSASDVEAAARALDFMLGWFMEPITSGDYPKSMKKFVGSRLPKFSPEQSKMLKGSYDFVGLNYYTASYVTNASTNSSGSNNFSYNTDIHVTYETDRNGVPIGPQSGSDWLLIYPEGIRKILVYTKKTYNVPLIYVTENGVDDVKNTNLTLSEARKDSMRLKYLQDHIFNVRQAMNDGVNVKGYFAWSLLDNFEWGEGYGVRFGIIHIDYNDNFARYPKDSAVWLMNSFHKNISKLPAVKRSIREDDEEQVSSKRLRK.

A beta-D-glucoside contacts are provided by residues Gln-36, His-140, and 185–186 (NE). The active-site Proton donor is Glu-186. A disulfide bond links Cys-221 and Cys-230. A beta-D-glucoside-binding positions include Tyr-347, Glu-420, Trp-469, 476–477 (EW), and Phe-485. Glu-420 functions as the Nucleophile in the catalytic mechanism.

The protein belongs to the glycosyl hydrolase 1 family.

It carries out the reaction raucaffricine + H2O = vomilenine + D-glucose. It catalyses the reaction vomilenine + UDP-alpha-D-glucose = raucaffricine + UDP + H(+). Glucosidase specifically involved in alkaloid biosynthesis leading to the accumulation of several alkaloids, including ajmaline, an important plant-derived pharmaceutical used in the treatment of heart disorders. This chain is Raucaffricine-O-beta-D-glucosidase, found in Rauvolfia serpentina (Serpentine wood).